The following is a 689-amino-acid chain: Glycine--tRNA ligase beta subunit (689 aa).

This sequence belongs to the class-II aminoacyl-tRNA synthetase family. As to quaternary structure, tetramer of two alpha and two beta subunits.

The protein resides in the cytoplasm. The enzyme catalyses tRNA(Gly) + glycine + ATP = glycyl-tRNA(Gly) + AMP + diphosphate. This chain is Glycine--tRNA ligase beta subunit, found in Escherichia coli O127:H6 (strain E2348/69 / EPEC).